The sequence spans 368 residues: tRNA(Met) cytidine acetate ligase (368 aa).

ATP contacts are provided by residues 7-20 (IAEF…HKYL), G96, N152, and R175.

The protein belongs to the TmcAL family.

The protein resides in the cytoplasm. The catalysed reaction is cytidine(34) in elongator tRNA(Met) + acetate + ATP = N(4)-acetylcytidine(34) in elongator tRNA(Met) + AMP + diphosphate. Functionally, catalyzes the formation of N(4)-acetylcytidine (ac(4)C) at the wobble position of elongator tRNA(Met), using acetate and ATP as substrates. First activates an acetate ion to form acetyladenylate (Ac-AMP) and then transfers the acetyl group to tRNA to form ac(4)C34. The polypeptide is tRNA(Met) cytidine acetate ligase (Streptococcus pyogenes serotype M49 (strain NZ131)).